Here is a 733-residue protein sequence, read N- to C-terminus: Nuclear hormone receptor family member nhr-66 (733 aa).

Low complexity-rich tracts occupy residues 113 to 130 (PAIP…SQAS) and 165 to 185 (QQNR…QQQN). Residues 113–190 (PAIPSSSSCS…AQQQNSMARK (78 aa)) are disordered. Residues 266 to 343 (VPACAICGTD…SGMDKNSVQH (78 aa)) constitute a DNA-binding region (nuclear receptor). 2 NR C4-type zinc fingers span residues 269-289 (CAIC…CAAC) and 305-326 (CNKG…CRAC). The interval 361–396 (PDAEFEPSAKVSTVSEPSTSSGPSGGFNQNVSSPAG) is disordered. Positions 371–382 (VSTVSEPSTSSG) are enriched in low complexity. One can recognise an NR LBD domain in the interval 444 to 687 (CLGDWFRKPS…ACFNQMLDVE (244 aa)). The AF-2 stretch occupies residues 676 to 687 (ADACFNQMLDVE). Positions 691 to 733 (VSPDGQKDSEAEQGPSPVSVPEAARGSYQDDDMPPVLEKNCDL) are disordered.

It belongs to the nuclear hormone receptor family. As to quaternary structure, interacts with nuclear hormone receptor nhr-49; the interaction is direct. As to expression, widely expressed, including in hypodermis, gut, muscle, and neuronal cells of the ventral nerve cord, head, and tail ganglia. Expressed in the head ganglion in several sensory and interneurons, including AVA.

The protein localises to the nucleus. In terms of biological role, transcription factor. Binds to regulatory elements and regulates transcription of target genes, including the potassium channel accessory subunit mps-2. Negatively regulates transcription of mps-2, thereby modulating age-dependent memory decline. In concert with nuclear hormone receptor nhr-49, involved in regulating target genes with roles in sphingolipid breakdown and lipid remodeling. Plays a role in modulating mitochondrial morphology and function. This Caenorhabditis elegans protein is Nuclear hormone receptor family member nhr-66.